A 222-amino-acid chain; its full sequence is 2-C-methyl-D-erythritol 4-phosphate cytidylyltransferase (222 aa).

Belongs to the IspD/TarI cytidylyltransferase family. IspD subfamily.

The catalysed reaction is 2-C-methyl-D-erythritol 4-phosphate + CTP + H(+) = 4-CDP-2-C-methyl-D-erythritol + diphosphate. It functions in the pathway isoprenoid biosynthesis; isopentenyl diphosphate biosynthesis via DXP pathway; isopentenyl diphosphate from 1-deoxy-D-xylulose 5-phosphate: step 2/6. Its function is as follows. Catalyzes the formation of 4-diphosphocytidyl-2-C-methyl-D-erythritol from CTP and 2-C-methyl-D-erythritol 4-phosphate (MEP). This Thermotoga maritima (strain ATCC 43589 / DSM 3109 / JCM 10099 / NBRC 100826 / MSB8) protein is 2-C-methyl-D-erythritol 4-phosphate cytidylyltransferase.